A 187-amino-acid polypeptide reads, in one-letter code: HTH-type transcriptional repressor Rv1474c (187 aa).

The HTH tetR-type domain maps to 10–70 (AARRRQILDG…ALAREDTERM (61 aa)). Positions 33–52 (TVRRLEQAIGMSRGAIFHHF) form a DNA-binding region, H-T-H motif.

Homodimer.

With respect to regulation, binding to DNA is abolished in the presence of high concentration of iron. Specifically binds to tetracycline, which leads to a conformational change in the structure of the protein and inhibits the DNA binding activity. Functionally, represses the expression of the aconitase gene acn and its own expression, in an iron-responsive manner. Binds to the inverted repeat element present in the upstream region of acn (Rv1475c)-Rv1474c operon. Preferentially binds to major groove of the DNA. The sequence is that of HTH-type transcriptional repressor Rv1474c from Mycobacterium tuberculosis (strain ATCC 25618 / H37Rv).